The primary structure comprises 812 residues: Probable inorganic carbon transporter subunit DabA (812 aa).

4 residues coordinate Zn(2+): Cys337, Asp339, His499, and Cys514.

The protein belongs to the inorganic carbon transporter (TC 9.A.2) DabA family. In terms of assembly, forms a complex with DabB. Zn(2+) serves as cofactor.

The protein resides in the cell inner membrane. Functionally, part of an energy-coupled inorganic carbon pump. The polypeptide is Probable inorganic carbon transporter subunit DabA (Xanthomonas oryzae pv. oryzae (strain KACC10331 / KXO85)).